The following is a 992-amino-acid chain: RNA-directed RNA polymerase (992 aa).

The RdRp catalytic domain occupies 656-772 (PCAIGFDASR…ICSVDDEEVV (117 aa)). The tract at residues 963 to 992 (PKSPTKPVQRTASKPDLPDSQWQQALAAPL) is disordered. Residues 964–974 (KSPTKPVQRTA) show a composition bias toward polar residues.

The protein belongs to the tombusviridae RNA polymerase family.

Its subcellular location is the host membrane. It catalyses the reaction RNA(n) + a ribonucleoside 5'-triphosphate = RNA(n+1) + diphosphate. In terms of biological role, RNA-dependent RNA polymerase that plays an essential role in the virus replication. The protein is RNA-directed RNA polymerase of Muhlenbergia (Blackwell switchgrass).